Consider the following 383-residue polypeptide: Lipid-A-disaccharide synthase (383 aa).

The protein belongs to the LpxB family.

It carries out the reaction a lipid X + a UDP-2-N,3-O-bis[(3R)-3-hydroxyacyl]-alpha-D-glucosamine = a lipid A disaccharide + UDP + H(+). The protein operates within bacterial outer membrane biogenesis; LPS lipid A biosynthesis. Its function is as follows. Condensation of UDP-2,3-diacylglucosamine and 2,3-diacylglucosamine-1-phosphate to form lipid A disaccharide, a precursor of lipid A, a phosphorylated glycolipid that anchors the lipopolysaccharide to the outer membrane of the cell. The polypeptide is Lipid-A-disaccharide synthase (Aliivibrio salmonicida (strain LFI1238) (Vibrio salmonicida (strain LFI1238))).